The chain runs to 353 residues: (-)-beta-caryophyllene synthase ((2E,6E)-farnesyl diphosphate cyclizing) (353 aa).

Mg(2+) contacts are provided by Asp85 and Asp89. The DDXXD motif signature appears at 85–89; that stretch reads DDQFD. Arg179 is a substrate binding site. Mg(2+) contacts are provided by Asn225 and Ser229. Lys232 is a binding site for substrate. Glu233 is a Mg(2+) binding site. 320 to 321 contributes to the substrate binding site; it reads RF.

The protein belongs to the terpene synthase family. Mg(2+) serves as cofactor.

It catalyses the reaction (2E,6E)-farnesyl diphosphate = (-)-(E)-beta-caryophyllene + diphosphate. Its pathway is secondary metabolite biosynthesis; terpenoid biosynthesis. Its function is as follows. Catalyzes the conversion of (2E,6E)-farnesyl diphosphate (FPP) to yield the bicyclic sesquiterpene (2S,10R)-(-)-(E)-beta-caryophyllene via a probable 1,10-cyclization, which could involve the abstraction of the pyrophosphate from FPP to yield a (E,E)-germacradienyl cation. This Saccharothrix espanaensis (strain ATCC 51144 / DSM 44229 / JCM 9112 / NBRC 15066 / NRRL 15764) protein is (-)-beta-caryophyllene synthase ((2E,6E)-farnesyl diphosphate cyclizing) (ptlA).